A 400-amino-acid polypeptide reads, in one-letter code: Cytochrome P450 BJ-1 homolog (400 aa).

C349 serves as a coordination point for heme.

The protein belongs to the cytochrome P450 family. Heme serves as cofactor.

In terms of biological role, cytochromes P450 are a group of heme-thiolate monooxygenases. They oxidize a variety of structurally unrelated compounds, including steroids, fatty acids, and xenobiotics. The sequence is that of Cytochrome P450 BJ-1 homolog (cyp112A2) from Sinorhizobium fredii (strain NBRC 101917 / NGR234).